The sequence spans 281 residues: Protein ZAR1-like 1.L (281 aa).

The 3CxxC-type zinc-finger motif lies at 183–267 (QKYGFFHCKN…QELCGRCKGQ (85 aa)).

Belongs to the ZAR1 family. Component of a cytoplasmic ribonucleoprotein complex together with eif4enif1/4E-T and cpeb1. In terms of tissue distribution, expressed in oocytes.

Its subcellular location is the cytoplasm. It localises to the cytoplasmic ribonucleoprotein granule. Functionally, mRNA-binding protein required for maternal mRNA storage, translation and degradation during oocyte maturation. Controls timing of meiosis during oogenesis. Probably promotes formation of some phase-separated membraneless compartment that stores maternal mRNAs in oocytes: acts by undergoing liquid-liquid phase separation upon binding to maternal mRNAs. Binds to the 3'-UTR of maternal mRNAs, inhibiting their translation. The protein is Protein ZAR1-like 1.L of Xenopus laevis (African clawed frog).